We begin with the raw amino-acid sequence, 266 residues long: Putative carbamate hydrolase RutD (266 aa).

This sequence belongs to the AB hydrolase superfamily. Hydrolase RutD family.

It catalyses the reaction carbamate + 2 H(+) = NH4(+) + CO2. Its function is as follows. Involved in pyrimidine catabolism. May facilitate the hydrolysis of carbamate, a reaction that can also occur spontaneously. The sequence is that of Putative carbamate hydrolase RutD from Escherichia coli O139:H28 (strain E24377A / ETEC).